The following is a 320-amino-acid chain: SUN domain-containing protein 3 (320 aa).

Residues 1–6 (MLTRSW) are Nuclear-facing. The chain crosses the membrane as a helical span at residues 7-29 (KIILSTVFISTFLLVGLLNHQWL). At 30–320 (KETEFPQKPR…RVHGIPSDYT (291 aa)) the chain is on the perinuclear space side. Residues 63–102 (KEQQELLKKESQTLENNFREILFLIEQIDVLKALLKDMKD) adopt a coiled-coil conformation. One can recognise an SUN domain in the interval 156–317 (GASVIEAGTS…YRFRVHGIPS (162 aa)).

In terms of assembly, self-associates. Interacts with SYNE1 and SPAG4/SUN4. Proposed to form a spermatogenesis-specific LINC complex with SYNE1 during sperm head formation possibly implicating a SUN domain-based heterotrimer with SPAG4/SUN4 associating with SYNE1. Can interact with SYNE3; the interaction is questioned by missing colocalization in spermatids. Specifically expressed in testis (at protein level).

The protein localises to the membrane. The protein resides in the nucleus envelope. It localises to the nucleus inner membrane. In terms of biological role, as a probable component of the LINC (LInker of Nucleoskeleton and Cytoskeleton) complex, involved in the connection between the nuclear lamina and the cytoskeleton. The nucleocytoplasmic interactions established by the LINC complex play an important role in the transmission of mechanical forces across the nuclear envelope and in nuclear movement and positioning. May be involved in nuclear remodeling during sperm head formation in spermatogenesis. A probable SUN3:SYNE1 LINC complex may tether spermatid nuclei to posterior cytoskeletal structures such as the manchette. The protein is SUN domain-containing protein 3 (Sun3) of Mus musculus (Mouse).